Reading from the N-terminus, the 213-residue chain is Protein Syd (213 aa).

It belongs to the Syd family.

The protein localises to the cell inner membrane. In terms of biological role, interacts with the SecY protein in vivo. May bind preferentially to an uncomplexed state of SecY, thus functioning either as a chelating agent for excess SecY in the cell or as a regulatory factor that negatively controls the translocase function. In Shewanella pealeana (strain ATCC 700345 / ANG-SQ1), this protein is Protein Syd.